Reading from the N-terminus, the 436-residue chain is tRNA (guanine(37)-N(1))-methyltransferase 1 (436 aa).

Residues H229, 277–278 (DL), and N325 each bind S-adenosyl-L-methionine.

Belongs to the class I-like SAM-binding methyltransferase superfamily. TRM5/TYW2 family. In terms of assembly, monomer.

Its subcellular location is the mitochondrion matrix. It localises to the nucleus. It is found in the cytoplasm. It carries out the reaction guanosine(37) in tRNA + S-adenosyl-L-methionine = N(1)-methylguanosine(37) in tRNA + S-adenosyl-L-homocysteine + H(+). Functionally, specifically methylates the N1 position of guanosine-37 in various cytoplasmic and mitochondrial tRNAs. Methylation is not dependent on the nature of the nucleoside 5' of the target nucleoside. This is the first step in the biosynthesis of wybutosine (yW), a modified base adjacent to the anticodon of tRNAs and required for accurate decoding. This chain is tRNA (guanine(37)-N(1))-methyltransferase 1, found in Phaeodactylum tricornutum (strain CCAP 1055/1).